A 315-amino-acid polypeptide reads, in one-letter code: Porphobilinogen deaminase (315 aa).

An S-(dipyrrolylmethanemethyl)cysteine modification is found at C245.

This sequence belongs to the HMBS family. As to quaternary structure, monomer. The cofactor is dipyrromethane.

The catalysed reaction is 4 porphobilinogen + H2O = hydroxymethylbilane + 4 NH4(+). It functions in the pathway porphyrin-containing compound metabolism; protoporphyrin-IX biosynthesis; coproporphyrinogen-III from 5-aminolevulinate: step 2/4. It participates in porphyrin-containing compound metabolism; chlorophyll biosynthesis. Its function is as follows. Tetrapolymerization of the monopyrrole PBG into the hydroxymethylbilane pre-uroporphyrinogen in several discrete steps. In Prochlorococcus marinus (strain NATL2A), this protein is Porphobilinogen deaminase.